The following is a 322-amino-acid chain: Hydroxypyruvate reductase (322 aa).

Residues 160–161 (RI), Asp180, 211–212 (CP), 238–240 (NSR), and Asp264 contribute to the NAD(+) site. The active site involves Arg240. Residue Glu269 is part of the active site. The active-site Proton donor is His288.

Belongs to the D-isomer specific 2-hydroxyacid dehydrogenase family.

The enzyme catalyses (R)-glycerate + NAD(+) = 3-hydroxypyruvate + NADH + H(+). Its pathway is carbohydrate metabolism. Involved in catabolism of D-apiose. Catalyzes the reduction of 3-hydroxypyruvate to glycerate. This Blautia hydrogenotrophica (strain DSM 10507 / JCM 14656 / S5a33) (Ruminococcus hydrogenotrophicus) protein is Hydroxypyruvate reductase.